The sequence spans 253 residues: Triosephosphate isomerase (253 aa).

Residue 9 to 11 (NWK) participates in substrate binding. The active-site Electrophile is His-95. Catalysis depends on Glu-167, which acts as the Proton acceptor. Substrate contacts are provided by residues Gly-173, Ser-213, and 234-235 (GG). Position 213 is a phosphoserine (Ser-213).

Belongs to the triosephosphate isomerase family. Homodimer.

The protein resides in the cytoplasm. It catalyses the reaction D-glyceraldehyde 3-phosphate = dihydroxyacetone phosphate. It functions in the pathway carbohydrate biosynthesis; gluconeogenesis. Its pathway is carbohydrate degradation; glycolysis; D-glyceraldehyde 3-phosphate from glycerone phosphate: step 1/1. Functionally, involved in the gluconeogenesis. Catalyzes stereospecifically the conversion of dihydroxyacetone phosphate (DHAP) to D-glyceraldehyde-3-phosphate (G3P). This is Triosephosphate isomerase from Bacillus pumilus (strain SAFR-032).